The chain runs to 197 residues: dTTP/UTP pyrophosphatase (197 aa).

Asp70 acts as the Proton acceptor in catalysis.

The protein belongs to the Maf family. YhdE subfamily. A divalent metal cation is required as a cofactor.

The protein localises to the cytoplasm. It carries out the reaction dTTP + H2O = dTMP + diphosphate + H(+). The enzyme catalyses UTP + H2O = UMP + diphosphate + H(+). Nucleoside triphosphate pyrophosphatase that hydrolyzes dTTP and UTP. May have a dual role in cell division arrest and in preventing the incorporation of modified nucleotides into cellular nucleic acids. In Methanosarcina barkeri (strain Fusaro / DSM 804), this protein is dTTP/UTP pyrophosphatase.